The chain runs to 364 residues: F-box/kelch-repeat protein At3g23880 (364 aa).

The 47-residue stretch at 8-54 (MFSPHNLPLEMMEEILLRLPVKSLTRFKCVCSSWRSLISETLFALKH) folds into the F-box domain. Kelch repeat units follow at residues 169–215 (DYKV…SRSG) and 216–265 (IYIN…TLGD).

This Arabidopsis thaliana (Mouse-ear cress) protein is F-box/kelch-repeat protein At3g23880.